The sequence spans 59 residues: Arabinogalactan protein 13 (59 aa).

Positions 1-27 are cleaved as a signal peptide; it reads MEAMKMRLFVAVLVAAMAFSAVQQAAA. A 4-hydroxyproline mark is found at Pro31, Pro33, and Pro35. O-linked (Ara...) hydroxyproline glycans are attached at residues Pro31, Pro33, and Pro35. A lipid anchor (GPI-anchor amidated serine) is attached at Ser37. A propeptide spans 38-59 (removed in mature form); it reads DASLAIPAFFASVATLAFGFLF.

This sequence belongs to the AG-peptide AGP family. Post-translationally, contains 4-hydroxyproline; hydroxylated on Pro-31, Pro-33 and Pro-35. O-glycosylated on hydroxyprolines; noncontiguous hydroxylproline residues are glycosylated with arabinogalactan.

It is found in the cell membrane. In terms of biological role, proteoglycan that seems to be implicated in diverse developmental roles such as differentiation, cell-cell recognition, embryogenesis and programmed cell death. This is Arabinogalactan protein 13 from Arabidopsis thaliana (Mouse-ear cress).